We begin with the raw amino-acid sequence, 577 residues long: Secreted LysM effector Lys4 (577 aa).

The first 19 residues, 1-19 (MRALTAAVLFVAGLTPVLA), serve as a signal peptide directing secretion. The LysM 1 domain maps to 38–85 (AWYTIVKGDGCDTVEKKFKITPEQFFKWNPDVSTDCVKNFWVGNSYCV). The span at 96–121 (TSTTVKSSSTTQKTSSTSSKLSSSSK) shows a compositional bias: low complexity. Residues 96–135 (TSTTVKSSSTTQKTSSTSSKLSSSSKPVNTTTTPYSTRNP) are disordered. A compositionally biased stretch (polar residues) spans 122–135 (PVNTTTTPYSTRNP). 4 N-linked (GlcNAc...) asparagine glycosylation sites follow: N124, N140, N216, and N235. 3 LysM domains span residues 251 to 298 (NFYQ…YYCV), 328 to 375 (KWYQ…WYCV), and 408 to 455 (QYWL…YVCV). The span at 464 to 485 (SGSTTTITGPPTKGSNPPTTTT) shows a compositional bias: low complexity. Residues 464–490 (SGSTTTITGPPTKGSNPPTTTTSGGGG) form a disordered region. Residues 510–558 (FWFRGKDGASLFCADIAKDAGVSLPDFLKWNPGVGSNCESLWADTWYCV) enclose the LysM 5 domain.

The protein belongs to the secreted LysM effector family.

Functionally, might have a role in sequestration of chitin oligosaccharides (breakdown products of fungal cell walls that are released during invasion and act as triggers of host immunity) to dampen host defense. The protein is Secreted LysM effector Lys4 of Pochonia chlamydosporia (strain 123) (Metacordyceps chlamydosporia).